Here is a 470-residue protein sequence, read N- to C-terminus: Protein ASPARTIC PROTEASE IN GUARD CELL 2 (470 aa).

An N-terminal signal peptide occupies residues Met-1–Ser-19. The 336-residue stretch at Tyr-131–Gly-466 folds into the Peptidase A1 domain. Asp-149 is a catalytic residue. 6 cysteine pairs are disulfide-bonded: Cys-159–Cys-162, Cys-165–Cys-239, Cys-186–Cys-204, Cys-191–Cys-199, Cys-278–Cys-470, and Cys-389–Cys-431. The active site involves Asp-350.

This sequence belongs to the peptidase A1 family.

Its function is as follows. Aspartic protease that may be involved in drought avoidance through abscisic acid signaling. The sequence is that of Protein ASPARTIC PROTEASE IN GUARD CELL 2 (ASPG2) from Arabidopsis thaliana (Mouse-ear cress).